The primary structure comprises 358 residues: MKILVVDDSALMRTTISDILQNIPNAEIKTARDGMDAIDKVMKWQPDVMTLDINMPNMDGLTCLTQIMVERPLPIVMLSSLTHEGAITTLEALYLGAVDFVAKPGGTICGRLQEVAPLIREKVRAAAKMRVKVHTQLSVSPAEVEHKHKSPVVENNEDHQLAIMGVSTGGPGTVETILRHLPADFSLPIIVNQHMPESFTAAFAQRLNRHLQQPVKEINRALVLEAGTVYVCKGDRDCIVTLRDGKLAAMPTPNDSHFSWHPSVSKLVASAIRTCGEDNLLCVMLTGMGDDGATEMAQVAQGNGIVFAQEPTTCVVPSMPEALLKRVPHIPTGTPEHLAYLMTEVVRQSSRELHYGNH.

A Response regulatory domain is found at 2-118; sequence KILVVDDSAL…CGRLQEVAPL (117 aa). Aspartate 52 bears the 4-aspartylphosphate mark. The CheB-type methylesterase domain occupies 155–325; sequence NNEDHQLAIM…VPSMPEALLK (171 aa). Catalysis depends on residues serine 167, histidine 194, and aspartate 291.

It belongs to the CheB family. Phosphorylated by CheA. Phosphorylation of the N-terminal regulatory domain activates the methylesterase activity.

The protein resides in the cytoplasm. It carries out the reaction [protein]-L-glutamate 5-O-methyl ester + H2O = L-glutamyl-[protein] + methanol + H(+). The catalysed reaction is L-glutaminyl-[protein] + H2O = L-glutamyl-[protein] + NH4(+). Its function is as follows. Involved in chemotaxis. Part of a chemotaxis signal transduction system that modulates chemotaxis in response to various stimuli. Catalyzes the demethylation of specific methylglutamate residues introduced into the chemoreceptors (methyl-accepting chemotaxis proteins or MCP) by CheR. Also mediates the irreversible deamidation of specific glutamine residues to glutamic acid. The protein is Protein-glutamate methylesterase/protein-glutamine glutaminase 3 of Vibrio cholerae serotype O1 (strain ATCC 39315 / El Tor Inaba N16961).